We begin with the raw amino-acid sequence, 472 residues long: Pyruvate kinase (472 aa).

Arginine 33 is a substrate binding site. Asparagine 35, serine 37, and aspartate 67 together coordinate K(+). Asparagine 35–histidine 38 is a binding site for ATP. Residues arginine 74 and lysine 155 each contribute to the ATP site. Position 220 (glutamate 220) interacts with Mg(2+). Residues glycine 243, aspartate 244, and threonine 276 each contribute to the substrate site. A Mg(2+)-binding site is contributed by aspartate 244.

The protein belongs to the pyruvate kinase family. In terms of assembly, homotetramer. It depends on Mg(2+) as a cofactor. K(+) serves as cofactor.

The catalysed reaction is pyruvate + ATP = phosphoenolpyruvate + ADP + H(+). The protein operates within carbohydrate degradation; glycolysis; pyruvate from D-glyceraldehyde 3-phosphate: step 5/5. The polypeptide is Pyruvate kinase (pyk) (Mycobacterium intracellulare).